A 174-amino-acid polypeptide reads, in one-letter code: Probable nicotinate-nucleotide adenylyltransferase (174 aa).

Belongs to the NadD family.

It carries out the reaction nicotinate beta-D-ribonucleotide + ATP + H(+) = deamido-NAD(+) + diphosphate. Its pathway is cofactor biosynthesis; NAD(+) biosynthesis; deamido-NAD(+) from nicotinate D-ribonucleotide: step 1/1. In terms of biological role, catalyzes the reversible adenylation of nicotinate mononucleotide (NaMN) to nicotinic acid adenine dinucleotide (NaAD). The chain is Probable nicotinate-nucleotide adenylyltransferase from Helicobacter pylori (strain HPAG1).